A 321-amino-acid chain; its full sequence is Cyclic AMP-AMP-AMP synthase (321 aa).

K63 serves as a coordination point for ATP. D72 and D74 together coordinate Mg(2+). ATP contacts are provided by residues D74, H162, K185, 201–203, and N270; that span reads KSF.

It belongs to the CD-NTase family. A01 subfamily. As to quaternary structure, forms complexes with Cap7 with 1:1 and 2:2 stoichimetry, and a 1:1:6 CdnC:Cap7:Cap6 complex. It depends on Mg(2+) as a cofactor.

It catalyses the reaction 3 ATP = 3',3',3'-c-tri-AMP + 3 diphosphate. It carries out the reaction 2 ATP = 3',3'-c-di-AMP + 2 diphosphate. The 2:2 CdnC:Cap7 (Cap7 is also called HORMA) complex is activated for cAAA synthesis by long dsDNA, but not 40 bp dsDNA or ssDNA; the 1:1 complex is inactive in vitro. The 2:2:DNA complex is catalytically disassembled and inactivated by Cap6 (also called Trip13). Its function is as follows. Cyclic nucleotide synthase (second messenger synthase) of a CBASS antivirus system. CBASS (cyclic oligonucleotide-based antiphage signaling system) provides immunity against bacteriophage. The CD-NTase protein synthesizes cyclic nucleotides in response to infection; these serve as specific second messenger signals. The signals activate a diverse range of effectors, leading to bacterial cell death and thus abortive phage infection. A type III-C(AAA) CBASS system. In terms of biological role, cyclic nucleotide synthase that upon activation catalyzes the synthesis of 3',3',3'-cyclic AMP-AMP-AMP (3',3',3'-c-tri-AMP or cAAA) as the major product, and 3',3'-c-di-AMP as a minor product. Cannot use GTP as a substrate. Functionally, protects E.coli strain JP313 against bacteriophage lambda cI- infection. When the cdnC-cap7-cap6-nucC operon is transformed into a susceptible strain it confers bacteriophage immunity. Mutations in the sensor (Cap7 also called HORMA) or effector proteins (CdnC, NucC) but not the disassembly protein (Cap6 also called Trip13) no longer confer immunity. The presence of the intact operon leads to culture collapse and cell death, which occurs before the phage has finished its replication cycle, thus protecting non-infected bacteria by aborting the phage infection and preventing its propagation. This Escherichia coli (strain MS 115-1) protein is Cyclic AMP-AMP-AMP synthase.